A 94-amino-acid polypeptide reads, in one-letter code: Conotoxin Im026 (94 aa).

Residues 1-24 (MRLTTMHSVILMLLLVFAFDNVDG) form the signal peptide. Residues 25 to 59 (DEPGQTARDVDNRNFMSILRSEGKPVHFLRAIKKR) constitute a propeptide that is removed on maturation.

In terms of processing, contains 4 disulfide bonds. Expressed by the venom duct.

The protein resides in the secreted. Its function is as follows. Probable neurotoxin. The chain is Conotoxin Im026 from Conus imperialis (Imperial cone).